Here is a 120-residue protein sequence, read N- to C-terminus: uncharacterized protein (120 aa).

Residues 7 to 120 (VFAKIITKNL…KLIGLINNND (114 aa)) form the HIT domain. The Histidine triad motif signature appears at 101 to 105 (HFHFH).

This is an uncharacterized protein from Rickettsia prowazekii (strain Madrid E).